A 508-amino-acid polypeptide reads, in one-letter code: PTS system mannitol-specific EIICB component (508 aa).

At 1-30 the chain is on the cytoplasmic side; sequence MSQTETQENKGLGRKVQAFGSFLSSMIMPN. Positions 19-351 constitute a PTS EIIC type-2 domain; the sequence is FGSFLSSMIM…LKFTKEPEED (333 aa). The chain crosses the membrane as a helical span at residues 31–52; the sequence is IGAFIAWGFIAAIFIDGGWWPN. Topologically, residues 53–56 are extracellular; the sequence is KDLS. The helical transmembrane segment at 57 to 77 threads the bilayer; sequence ELAGPMISYLIPLLIAYSGGR. The Cytoplasmic portion of the chain corresponds to 78–141; that stretch reads LIHEMRGGII…QGFEMLFNNF (64 aa). The helical transmembrane segment at 142–163 threads the bilayer; it reads SAGILGFIMTIVGFKILAPIME. Residues 164 to 172 lie on the Extracellular side of the membrane; the sequence is FIMHILSLA. The chain crosses the membrane as a helical span at residues 173 to 193; it reads VEALVHAHLLPLVSIIVEPAK. Topologically, residues 194 to 280 are cytoplasmic; sequence IVFLNNAINH…VLMRPLLFIA (87 aa). Residues 281 to 300 form a helical membrane-spanning segment; the sequence is VILGGMTGVATYSLLDFGFK. Residues 301–320 lie on the Extracellular side of the membrane; the sequence is SPASPGSFIVYMLNAPKGEF. Residues 321–342 traverse the membrane as a helical segment; the sequence is LHMVLGVLLAAIVSFIVAALIL. At 343 to 508 the chain is on the cytoplasmic side; sequence KFTKEPEEDL…RYDELLENLK (166 aa). Residues 355-400 are disordered; it reads ATEKMEASKGKKSSVSSKLKGNEDNNATSTTASTSTSENNEEQSEE. Over residues 367-392 the composition is skewed to low complexity; that stretch reads SSVSSKLKGNEDNNATSTTASTSTSE. Positions 420–508 constitute a PTS EIIB type-2 domain; the sequence is NHVIFACDAG…RYDELLENLK (89 aa). Residue cysteine 426 is the Phosphocysteine intermediate; for EIIB activity of the active site. At cysteine 426 the chain carries Phosphocysteine; by EIIA.

In terms of assembly, homodimer.

The protein localises to the cell membrane. It carries out the reaction D-mannitol(out) + N(pros)-phospho-L-histidyl-[protein] = D-mannitol 1-phosphate(in) + L-histidyl-[protein]. The phosphoenolpyruvate-dependent sugar phosphotransferase system (sugar PTS), a major carbohydrate active transport system, catalyzes the phosphorylation of incoming sugar substrates concomitantly with their translocation across the cell membrane. The enzyme II CmtAB PTS system is involved in D-mannitol transport. The polypeptide is PTS system mannitol-specific EIICB component (mtlA) (Staphylococcus saprophyticus subsp. saprophyticus (strain ATCC 15305 / DSM 20229 / NCIMB 8711 / NCTC 7292 / S-41)).